The primary structure comprises 367 residues: MNVLEQLKRLDEMPKRYKTMERSELEARARAVKERFGRRLFIPGHHYQKDEVIQFADATGDSLQLAQLAAKNSEAEYIVFCGVHFMAETADILTSDDQTVILPDLRAGCSMADMADIFQVERAWAALIERFGETIVPLVYVNSTAAIKAFVGRHGGATVTSSNAKKMMAWAFSRNERIFFLPDQHLGRNTAYALGIRLDEMAVWDPHEETLQGADDLDKVKVILWKGHCSVHENFTVRQIEHIRRMKPGIHVIVHPECSWEVVQQADYAGSTKYIIETIRNAPPGTQWAIGTEMNLVNRLKHEHPDKEIVSLNPYMCPCLTMNRIDLPHFVWALESLEQGAIVNRITVPKDIAAEAKEALDRMLSLA.

Histidine 45 and serine 62 together coordinate iminosuccinate. Position 109 (cysteine 109) interacts with [4Fe-4S] cluster. Iminosuccinate is bound by residues 140-142 (YVN) and serine 161. Residue cysteine 229 coordinates [4Fe-4S] cluster. Iminosuccinate is bound by residues 255-257 (HPE) and threonine 272. Cysteine 319 provides a ligand contact to [4Fe-4S] cluster.

Belongs to the quinolinate synthase family. Type 3 subfamily. It depends on [4Fe-4S] cluster as a cofactor.

It is found in the cytoplasm. It catalyses the reaction iminosuccinate + dihydroxyacetone phosphate = quinolinate + phosphate + 2 H2O + H(+). The protein operates within cofactor biosynthesis; NAD(+) biosynthesis; quinolinate from iminoaspartate: step 1/1. Its function is as follows. Catalyzes the condensation of iminoaspartate with dihydroxyacetone phosphate to form quinolinate. The polypeptide is Quinolinate synthase (Geobacillus kaustophilus (strain HTA426)).